The chain runs to 319 residues: 4-diphosphocytidyl-2-C-methyl-D-erythritol kinase (319 aa).

Lys21 is an active-site residue. 106–116 (PIGAGLAGGSS) serves as a coordination point for ATP. Asp148 is an active-site residue.

This sequence belongs to the GHMP kinase family. IspE subfamily.

The enzyme catalyses 4-CDP-2-C-methyl-D-erythritol + ATP = 4-CDP-2-C-methyl-D-erythritol 2-phosphate + ADP + H(+). It functions in the pathway isoprenoid biosynthesis; isopentenyl diphosphate biosynthesis via DXP pathway; isopentenyl diphosphate from 1-deoxy-D-xylulose 5-phosphate: step 3/6. Its function is as follows. Catalyzes the phosphorylation of the position 2 hydroxy group of 4-diphosphocytidyl-2C-methyl-D-erythritol. The chain is 4-diphosphocytidyl-2-C-methyl-D-erythritol kinase from Prochlorococcus marinus (strain MIT 9313).